A 219-amino-acid chain; its full sequence is ATP-dependent dethiobiotin synthetase BioD (219 aa).

An ATP-binding site is contributed by 12–17; the sequence is GVGKTI. Thr-16 contributes to the Mg(2+) binding site. Residue Lys-32 is part of the active site. Residues Asp-43 and 96–99 each bind ATP; that span reads ETSG. Mg(2+) is bound by residues Asp-43 and Glu-96.

The protein belongs to the dethiobiotin synthetase family. In terms of assembly, homodimer. Mg(2+) is required as a cofactor.

Its subcellular location is the cytoplasm. It carries out the reaction (7R,8S)-7,8-diammoniononanoate + CO2 + ATP = (4R,5S)-dethiobiotin + ADP + phosphate + 3 H(+). It participates in cofactor biosynthesis; biotin biosynthesis; biotin from 7,8-diaminononanoate: step 1/2. Functionally, catalyzes a mechanistically unusual reaction, the ATP-dependent insertion of CO2 between the N7 and N8 nitrogen atoms of 7,8-diaminopelargonic acid (DAPA, also called 7,8-diammoniononanoate) to form a ureido ring. This Chlamydia pneumoniae (Chlamydophila pneumoniae) protein is ATP-dependent dethiobiotin synthetase BioD.